Consider the following 319-residue polypeptide: Olfactory receptor 2S2 (319 aa).

Residues 1–26 (MEKANETSPVMGFVLLRLSAHPELEK) lie on the Extracellular side of the membrane. Asparagine 5 carries N-linked (GlcNAc...) asparagine glycosylation. The chain crosses the membrane as a helical span at residues 27–50 (TFFVLILLMYLVILLGNGVLILVT). Topologically, residues 51-58 (ILDSRLHT) are cytoplasmic. A helical transmembrane segment spans residues 59-80 (PMYFFLGNLSFLDICFTTSSVP). Topologically, residues 81-101 (LVLDSFLTPQETISFSACAVQ) are extracellular. The cysteines at positions 98 and 190 are disulfide-linked. Residues 102–121 (MALSFAMAGTECLLLSMMAF) form a helical membrane-spanning segment. At 122 to 140 (DRYVAICNPLRYSVIMSKA) the chain is on the cytoplasmic side. Residues 141–159 (AYMPMAASSWAIGGAASVV) traverse the membrane as a helical segment. At 160-196 (HTSLAIQLPFCGDNVINHFTCEILAVLKLACADISIN) the chain is on the extracellular side. The helical transmembrane segment at 197 to 220 (VISMEVTNVIFLGVPVLFISFSYV) threads the bilayer. The Cytoplasmic portion of the chain corresponds to 221-237 (FIITTILRIPSAEGRKK). The helical transmembrane segment at 238-260 (VFSTCSAHLTVVIVFYGTLFFMY) threads the bilayer. Residues 261–279 (GKPKSKDSMGADKEDLSDK) lie on the Extracellular side of the membrane. Residues 280–299 (LIPLFYGVVTPMLNPIIYSL) traverse the membrane as a helical segment. The Cytoplasmic portion of the chain corresponds to 300 to 319 (RNKDVKAAVRRLLRPKGFTQ).

It belongs to the G-protein coupled receptor 1 family.

It localises to the cell membrane. Its function is as follows. Odorant receptor. This Homo sapiens (Human) protein is Olfactory receptor 2S2 (OR2S2).